A 213-amino-acid polypeptide reads, in one-letter code: ATP synthase peripheral stalk subunit OSCP, mitochondrial (213 aa).

The transit peptide at methionine 1–proline 23 directs the protein to the mitochondrion. The SIFI-degron signature appears at alanine 5–proline 23. Lysine 60, lysine 70, and lysine 73 each carry N6-acetyllysine. The residue at position 90 (lysine 90) is an N6-succinyllysine. N6-acetyllysine; alternate occurs at positions 100 and 158. Lysine 100 and lysine 158 each carry N6-succinyllysine; alternate. An N6-acetyllysine mark is found at lysine 176 and lysine 192. Lysine 199 bears the N6-succinyllysine mark.

Belongs to the ATPase delta chain family. Component of the ATP synthase complex composed at least of ATP5F1A/subunit alpha, ATP5F1B/subunit beta, ATP5MC1/subunit c (homooctomer), MT-ATP6/subunit a, MT-ATP8/subunit 8, ATP5ME/subunit e, ATP5MF/subunit f, ATP5MG/subunit g, ATP5MK/subunit k, ATP5MJ/subunit j, ATP5F1C/subunit gamma, ATP5F1D/subunit delta, ATP5F1E/subunit epsilon, ATP5PF/subunit F6, ATP5PB/subunit b, ATP5PD/subunit d, ATP5PO/subunit OSCP. ATP synthase complex consists of a soluble F(1) head domain (subunits alpha(3) and beta(3)) - the catalytic core - and a membrane F(0) domain - the membrane proton channel (subunits c, a, 8, e, f, g, k and j). These two domains are linked by a central stalk (subunits gamma, delta, and epsilon) rotating inside the F1 region and a stationary peripheral stalk (subunits F6, b, d, and OSCP). In response to mitochondrial stress, the precursor protein is ubiquitinated by the SIFI complex in the cytoplasm before mitochondrial import, leading to its degradation. Within the SIFI complex, UBR4 initiates ubiquitin chain that are further elongated or branched by KCMF1. Expressed by the principal cells of the epididymis. Detected in flagella of epididymal sperm (at protein level).

Its subcellular location is the mitochondrion. It is found in the mitochondrion inner membrane. Functionally, subunit OSCP, of the mitochondrial membrane ATP synthase complex (F(1)F(0) ATP synthase or Complex V) that produces ATP from ADP in the presence of a proton gradient across the membrane which is generated by electron transport complexes of the respiratory chain. ATP synthase complex consist of a soluble F(1) head domain - the catalytic core - and a membrane F(1) domain - the membrane proton channel. These two domains are linked by a central stalk rotating inside the F(1) region and a stationary peripheral stalk. During catalysis, ATP synthesis in the catalytic domain of F(1) is coupled via a rotary mechanism of the central stalk subunits to proton translocation. In vivo, can only synthesize ATP although its ATP hydrolase activity can be activated artificially in vitro. Part of the complex F(0) domain. Part of the complex F(0) domain and the peripheric stalk, which acts as a stator to hold the catalytic alpha(3)beta(3) subcomplex and subunit a/ATP6 static relative to the rotary elements. This Rattus norvegicus (Rat) protein is ATP synthase peripheral stalk subunit OSCP, mitochondrial.